The sequence spans 138 residues: MAKPIPRIGSQRNRRINSRKNARKMPKGVIYVQAGFNNTIVTVTDVRGRVVSWASAGTCGFKGAKRGTPFAAQTAAGNAIRKVVDQGMQRAEVMIKGPGLGRDAALRAIRRSGILLSFVRDVTPMPHNGCRPPKKRRV.

The disordered stretch occupies residues 1-22 (MAKPIPRIGSQRNRRINSRKNA). The segment covering 12–22 (RNRRINSRKNA) has biased composition (basic residues).

This sequence belongs to the universal ribosomal protein uS11 family. In terms of assembly, part of the 30S ribosomal subunit.

It localises to the plastid. The protein localises to the chloroplast. This chain is Small ribosomal subunit protein uS11c, found in Fagopyrum esculentum subsp. ancestrale (Wild buckwheat).